The sequence spans 132 residues: Small ribosomal subunit protein uS8 (132 aa).

Belongs to the universal ribosomal protein uS8 family. Part of the 30S ribosomal subunit. Contacts proteins S5 and S12.

In terms of biological role, one of the primary rRNA binding proteins, it binds directly to 16S rRNA central domain where it helps coordinate assembly of the platform of the 30S subunit. In Clostridioides difficile (strain 630) (Peptoclostridium difficile), this protein is Small ribosomal subunit protein uS8.